Here is a 546-residue protein sequence, read N- to C-terminus: CTP synthase (546 aa).

The tract at residues 1 to 267 is amidoligase domain; the sequence is MTKFIFVTGG…AEQVLDILQL (267 aa). Ser-13 lines the CTP pocket. Ser-13 is a binding site for UTP. 14-19 contributes to the ATP binding site; sequence SIGKGI. Residue Tyr-54 participates in L-glutamine binding. An ATP-binding site is contributed by Asp-71. Residues Asp-71 and Glu-141 each contribute to the Mg(2+) site. Residues 148–150, 188–193, and Lys-224 each bind CTP; these read DIE and KTKPTQ. Residues 188-193 and Lys-224 each bind UTP; that span reads KTKPTQ. Positions 292–534 constitute a Glutamine amidotransferase type-1 domain; it reads EVAIVGKYVR…IKAALGSDLT (243 aa). Position 354 (Gly-354) interacts with L-glutamine. Cys-381 serves as the catalytic Nucleophile; for glutamine hydrolysis. Residues 382–385, Glu-405, and Arg-462 each bind L-glutamine; that span reads LGMQ. Residues His-507 and Glu-509 contribute to the active site.

This sequence belongs to the CTP synthase family. As to quaternary structure, homotetramer.

The enzyme catalyses UTP + L-glutamine + ATP + H2O = CTP + L-glutamate + ADP + phosphate + 2 H(+). It carries out the reaction L-glutamine + H2O = L-glutamate + NH4(+). The catalysed reaction is UTP + NH4(+) + ATP = CTP + ADP + phosphate + 2 H(+). The protein operates within pyrimidine metabolism; CTP biosynthesis via de novo pathway; CTP from UDP: step 2/2. With respect to regulation, allosterically activated by GTP, when glutamine is the substrate; GTP has no effect on the reaction when ammonia is the substrate. The allosteric effector GTP functions by stabilizing the protein conformation that binds the tetrahedral intermediate(s) formed during glutamine hydrolysis. Inhibited by the product CTP, via allosteric rather than competitive inhibition. Functionally, catalyzes the ATP-dependent amination of UTP to CTP with either L-glutamine or ammonia as the source of nitrogen. Regulates intracellular CTP levels through interactions with the four ribonucleotide triphosphates. The chain is CTP synthase from Synechococcus sp. (strain ATCC 27144 / PCC 6301 / SAUG 1402/1) (Anacystis nidulans).